Here is a 148-residue protein sequence, read N- to C-terminus: Ribonuclease H (148 aa).

The region spanning Met-1–Glu-143 is the RNase H type-1 domain. Mg(2+)-binding residues include Asp-9, Glu-47, Asp-69, and Asp-135.

This sequence belongs to the RNase H family. As to quaternary structure, monomer. Mg(2+) serves as cofactor.

It is found in the cytoplasm. The enzyme catalyses Endonucleolytic cleavage to 5'-phosphomonoester.. Its function is as follows. Endonuclease that specifically degrades the RNA of RNA-DNA hybrids. This is Ribonuclease H from Acidovorax sp. (strain JS42).